The chain runs to 176 residues: ATP-dependent protease subunit HslV (176 aa).

Residue T4 is part of the active site. Na(+) contacts are provided by A159, C162, and T165.

This sequence belongs to the peptidase T1B family. HslV subfamily. As to quaternary structure, a double ring-shaped homohexamer of HslV is capped on each side by a ring-shaped HslU homohexamer. The assembly of the HslU/HslV complex is dependent on binding of ATP.

It is found in the cytoplasm. It carries out the reaction ATP-dependent cleavage of peptide bonds with broad specificity.. With respect to regulation, allosterically activated by HslU binding. In terms of biological role, protease subunit of a proteasome-like degradation complex believed to be a general protein degrading machinery. The polypeptide is ATP-dependent protease subunit HslV (Wolbachia sp. subsp. Brugia malayi (strain TRS)).